The chain runs to 549 residues: Chaperonin GroEL (549 aa).

Residues Thr-30 to Pro-33, Lys-51, Asp-87 to Thr-91, Gly-415, Asn-479 to Ala-481, and Asp-495 contribute to the ATP site.

It belongs to the chaperonin (HSP60) family. As to quaternary structure, forms a cylinder of 14 subunits composed of two heptameric rings stacked back-to-back. Interacts with the co-chaperonin GroES.

The protein localises to the cytoplasm. The enzyme catalyses ATP + H2O + a folded polypeptide = ADP + phosphate + an unfolded polypeptide.. Together with its co-chaperonin GroES, plays an essential role in assisting protein folding. The GroEL-GroES system forms a nano-cage that allows encapsulation of the non-native substrate proteins and provides a physical environment optimized to promote and accelerate protein folding. This is Chaperonin GroEL from Stenotrophomonas maltophilia (strain R551-3).